Here is a 355-residue protein sequence, read N- to C-terminus: Anthocyanin synthase (355 aa).

Positions 145 and 216 each coordinate substrate. The region spanning 211–310 (LLLQMKINYY…RISWAVFCEP (100 aa)) is the Fe2OG dioxygenase domain. Residue 218–220 (NYY) participates in 2-oxoglutarate binding. His-235 is a Fe cation binding site. Thr-236 contacts substrate. The Fe cation site is built by Asp-237 and His-291. Residues Arg-301 and 301–303 (RIS) each bind 2-oxoglutarate. 2 residues coordinate substrate: Glu-309 and Lys-344.

Belongs to the iron/ascorbate-dependent oxidoreductase family. L-ascorbate is required as a cofactor. Fe(2+) serves as cofactor. In terms of tissue distribution, expressed in stems and leaves. Expressed at low levels in ovaries.

The enzyme catalyses a (2R,3S,4S)-leucoanthocyanidin + 2-oxoglutarate + O2 = a 4-H-anthocyanidin with a 3-hydroxy group + succinate + CO2 + 2 H2O. It participates in pigment biosynthesis; anthocyanin biosynthesis. Functionally, involved in anthocyanin biosynthesis by catalyzing the oxidation of leucoanthocyanidins into anthocyanidins. Required for the accumulation of anthocyanin in red-fleshed kiwifruit varieties. This is Anthocyanin synthase from Actinidia chinensis var. chinensis (Chinese soft-hair kiwi).